A 393-amino-acid chain; its full sequence is Sugar efflux transporter B (393 aa).

A run of 12 helical transmembrane segments spans residues 13-33, 51-71, 82-102, 106-126, 152-172, 174-194, 219-239, 253-273, 283-303, 306-326, 344-364, and 366-386; these read FDLTSTAFLIVAFLTGIAGAL, AMVGFFFTGSAVIGILVSQFL, KSLIVFCCLLGVLACTLFAWN, FVLLFVGVFLSSFGSTANPQM, VSLAWVIGPPLAYALAMGFSF, VMYLSAAVAFIVCGVMVWLFL, LLLFVICTLMWGSNSLYIINM, LAGVMMGTAAGLEIPTMLIAG, FLMRVAAVGGVCFYAGMLMAH, VILLGLQLLNAIFIGILGGIG, LYTNTSRVGWIIAGSVAGIVA, and IWNYHAVFWFAMVMIIATLFC.

It belongs to the major facilitator superfamily. Set transporter family.

It is found in the cell inner membrane. Functionally, involved in the efflux of sugars. The physiological role may be the detoxification of non-metabolizable sugar analogs. Can transport lactose and glucose. In Escherichia coli (strain K12), this protein is Sugar efflux transporter B (setB).